Here is a 71-residue protein sequence, read N- to C-terminus: MPTVRVKENEPFEVALRRFKRSCEKAGVLTEVRRREFYEKPTEERKRKAAAARKRALKRMRRQSMRLVRLY.

This sequence belongs to the bacterial ribosomal protein bS21 family.

The protein is Small ribosomal subunit protein bS21 of Acidithiobacillus ferrooxidans (strain ATCC 23270 / DSM 14882 / CIP 104768 / NCIMB 8455) (Ferrobacillus ferrooxidans (strain ATCC 23270)).